A 245-amino-acid polypeptide reads, in one-letter code: 1-(5-phosphoribosyl)-5-[(5-phosphoribosylamino)methylideneamino] imidazole-4-carboxamide isomerase (245 aa).

The Proton acceptor role is filled by Asp-7. Catalysis depends on Asp-129, which acts as the Proton donor.

It belongs to the HisA/HisF family.

It is found in the cytoplasm. It catalyses the reaction 1-(5-phospho-beta-D-ribosyl)-5-[(5-phospho-beta-D-ribosylamino)methylideneamino]imidazole-4-carboxamide = 5-[(5-phospho-1-deoxy-D-ribulos-1-ylimino)methylamino]-1-(5-phospho-beta-D-ribosyl)imidazole-4-carboxamide. Its pathway is amino-acid biosynthesis; L-histidine biosynthesis; L-histidine from 5-phospho-alpha-D-ribose 1-diphosphate: step 4/9. In Shewanella baltica (strain OS223), this protein is 1-(5-phosphoribosyl)-5-[(5-phosphoribosylamino)methylideneamino] imidazole-4-carboxamide isomerase.